Here is a 263-residue protein sequence, read N- to C-terminus: Pheophorbidase (263 aa).

An AB hydrolase-1 domain is found at 13–244 (HFVFVHGASH…LEESDHSAFF (232 aa)). Ser88 acts as the Acyl-ester intermediate in catalysis. Active-site charge relay system residues include Asp212 and His240.

This sequence belongs to the AB hydrolase superfamily. As to quaternary structure, homodimer.

The protein localises to the cytoplasm. The catalysed reaction is pheophorbide a + H2O + H(+) = pyropheophorbide a + methanol + CO2. With respect to regulation, inhibited by methanol and phenylmethylsulfonicfluoride (PMSF). Functionally, involved in chlorophyll degradation. Specific for the pheophorbides of the dihydroporphyrin and tetrahydroporphyrin types. Chlorophyllide a, pheophytin a and the nonfluorescent chlorophyll catabolite (NCC) are not used as substrates. The polypeptide is Pheophorbidase (PPD) (Raphanus sativus (Radish)).